Reading from the N-terminus, the 528-residue chain is Phosphoenolpyruvate carboxykinase (ATP) (528 aa).

Residues arginine 56, tyrosine 192, and lysine 198 each contribute to the substrate site. Residues lysine 198, histidine 217, and 233–241 (GLSGTGKTT) each bind ATP. 2 residues coordinate Mn(2+): lysine 198 and histidine 217. Aspartate 254 contacts Mn(2+). The ATP site is built by glutamate 282, arginine 319, and threonine 444. Residue arginine 319 participates in substrate binding.

The protein belongs to the phosphoenolpyruvate carboxykinase (ATP) family. Mn(2+) is required as a cofactor.

Its subcellular location is the cytoplasm. The enzyme catalyses oxaloacetate + ATP = phosphoenolpyruvate + ADP + CO2. The protein operates within carbohydrate biosynthesis; gluconeogenesis. Its function is as follows. Involved in the gluconeogenesis. Catalyzes the conversion of oxaloacetate (OAA) to phosphoenolpyruvate (PEP) through direct phosphoryl transfer between the nucleoside triphosphate and OAA. This is Phosphoenolpyruvate carboxykinase (ATP) from Bacillus cereus (strain 03BB102).